Here is a 563-residue protein sequence, read N- to C-terminus: Eukaryotic translation initiation factor 3 subunit D-1 (563 aa).

A disordered region spans residues 98 to 136 (VQKPPHQRGRFRNMRGRGGRGRNPRGGLNNHHHHGMTTL). Positions 100-120 (KPPHQRGRFRNMRGRGGRGRN) are enriched in basic residues. The tract at residues 291-305 (EFDLLTVNESSVEPP) is RNA gate.

This sequence belongs to the eIF-3 subunit D family. Component of the eukaryotic translation initiation factor 3 (eIF-3) complex. The eIF-3 complex interacts with pix.

The protein resides in the cytoplasm. Functionally, mRNA cap-binding component of the eukaryotic translation initiation factor 3 (eIF-3) complex, which is involved in protein synthesis of a specialized repertoire of mRNAs and, together with other initiation factors, stimulates binding of mRNA and methionyl-tRNAi to the 40S ribosome. The eIF-3 complex specifically targets and initiates translation of a subset of mRNAs involved in cell proliferation. In the eIF-3 complex, eif3d specifically recognizes and binds the 7-methylguanosine cap of a subset of mRNAs. The chain is Eukaryotic translation initiation factor 3 subunit D-1 from Drosophila pseudoobscura pseudoobscura (Fruit fly).